Consider the following 407-residue polypeptide: Arginine deiminase (407 aa).

Cys-397 acts as the Amidino-cysteine intermediate in catalysis.

The protein belongs to the arginine deiminase family.

The protein localises to the cytoplasm. The enzyme catalyses L-arginine + H2O = L-citrulline + NH4(+). The protein operates within amino-acid degradation; L-arginine degradation via ADI pathway; carbamoyl phosphate from L-arginine: step 1/2. In Pediococcus pentosaceus (strain ATCC 25745 / CCUG 21536 / LMG 10740 / 183-1w), this protein is Arginine deiminase.